Consider the following 212-residue polypeptide: Transcription antitermination protein NusB (212 aa).

This sequence belongs to the NusB family.

Its function is as follows. Involved in transcription antitermination. Required for transcription of ribosomal RNA (rRNA) genes. Binds specifically to the boxA antiterminator sequence of the ribosomal RNA (rrn) operons. In Gloeothece citriformis (strain PCC 7424) (Cyanothece sp. (strain PCC 7424)), this protein is Transcription antitermination protein NusB.